The primary structure comprises 451 residues: CBL-interacting protein kinase 10 (451 aa).

The region spanning 13–267 (YEIGKLLGQG…VSEIMEDPWF (255 aa)) is the Protein kinase domain. Residues 19 to 27 (LGQGSFAKV) and Lys-42 contribute to the ATP site. The active-site Proton acceptor is the Asp-135. Positions 153 to 182 (DFGLSALAECKRQDGLLHTTCGTPAYVAPE) are activation loop. The 33-residue stretch at 304–336 (INEGKQEAENLTSLNAFDIISLSSGFDLSAMFE) folds into the NAF domain. The segment at 341–370 (KEESKFTSTNTATTITKKLEDVAKNLRLKF) is PPI.

The protein belongs to the protein kinase superfamily. CAMK Ser/Thr protein kinase family. SNF1 subfamily. Mn(2+) serves as cofactor.

It carries out the reaction L-seryl-[protein] + ATP = O-phospho-L-seryl-[protein] + ADP + H(+). The catalysed reaction is L-threonyl-[protein] + ATP = O-phospho-L-threonyl-[protein] + ADP + H(+). Its function is as follows. CIPK serine-threonine protein kinases interact with CBL proteins. Binding of a CBL protein to the regulatory NAF domain of CIPK protein lead to the activation of the kinase in a calcium-dependent manner. In Oryza sativa subsp. japonica (Rice), this protein is CBL-interacting protein kinase 10 (CIPK10).